The following is a 547-amino-acid chain: Germacrene A synthase (547 aa).

Mg(2+)-binding residues include D300, D304, D443, and E451. Positions 300–304 (DDTYD) match the DDXXD motif motif.

It belongs to the terpene synthase family. Tpsa subfamily. It depends on Mg(2+) as a cofactor. Mn(2+) is required as a cofactor. As to expression, expressed in leaves.

Its subcellular location is the plastid. It localises to the chloroplast. It catalyses the reaction (2E,6E)-farnesyl diphosphate = germacrene A + diphosphate. The catalysed reaction is (2E,6E)-farnesyl diphosphate = (1S,2S,4R)-beta-elemene + diphosphate. Its pathway is secondary metabolite biosynthesis; terpenoid biosynthesis. Its function is as follows. Sesquiterpene synthase involved in the biosynthesis of volatile compounds widely used in aromatherapy and folk medicine, and present in culinary herbs. Mediates the conversion of (2E,6E)-farnesyl diphosphate (FPP) into germacrene A and beta-elemene. Not able to use (2E)-geranyl diphosphate (GPP) as substrate. This Lavandula pedunculata subsp. lusitanica (French lavender) protein is Germacrene A synthase.